Consider the following 233-residue polypeptide: ATP synthase subunit C lysine N-methyltransferase (233 aa).

At methionine 1 the chain carries N-acetylmethionine. Residues 38-58 form a helical membrane-spanning segment; that stretch reads FLLTGLVGGTLVAVYAVATPF. The required for mitochondrial location stretch occupies residues 56–90; it reads TPFVTPALRKVCLPFVPATTKQIENVVKMLRCRRG.

It belongs to the ANT/ATPSC lysine N-methyltransferase family. As to expression, ubiquitously expressed.

It is found in the mitochondrion membrane. The catalysed reaction is L-lysyl-[protein] + 3 S-adenosyl-L-methionine = N(6),N(6),N(6)-trimethyl-L-lysyl-[protein] + 3 S-adenosyl-L-homocysteine + 3 H(+). Functionally, mitochondrial protein-lysine N-methyltransferase that trimethylates ATP synthase subunit C, ATP5MC1 and ATP5MC2. Trimethylation is required for proper incorporation of the C subunit into the ATP synthase complex and mitochondrial respiration. Promotes chronic pain. Involved in persistent inflammatory and neuropathic pain: methyltransferase activity in the mitochondria of sensory neurons promotes chronic pain via a pathway that depends on the production of reactive oxygen species (ROS) and on the engagement of spinal cord microglia. The chain is ATP synthase subunit C lysine N-methyltransferase from Homo sapiens (Human).